The following is a 74-amino-acid chain: Pelophylaxin-2 (74 aa).

The signal sequence occupies residues Met-1–Cys-22. The propeptide occupies Glu-23–Val-42. The cysteines at positions 68 and 74 are disulfide-linked.

Expressed by the skin glands.

Its subcellular location is the secreted. In terms of biological role, antimicrobial peptide. This is Pelophylaxin-2 from Pelophylax fukienensis (Fukien gold-striped pond frog).